A 62-amino-acid chain; its full sequence is Large ribosomal subunit protein bL28 (62 aa).

The protein belongs to the bacterial ribosomal protein bL28 family.

This is Large ribosomal subunit protein bL28 from Streptococcus mutans serotype c (strain ATCC 700610 / UA159).